The sequence spans 267 residues: Tryptophan synthase alpha chain (267 aa).

Active-site proton acceptor residues include Glu49 and Asp60.

The protein belongs to the TrpA family. Tetramer of two alpha and two beta chains.

It catalyses the reaction (1S,2R)-1-C-(indol-3-yl)glycerol 3-phosphate + L-serine = D-glyceraldehyde 3-phosphate + L-tryptophan + H2O. The protein operates within amino-acid biosynthesis; L-tryptophan biosynthesis; L-tryptophan from chorismate: step 5/5. The alpha subunit is responsible for the aldol cleavage of indoleglycerol phosphate to indole and glyceraldehyde 3-phosphate. The polypeptide is Tryptophan synthase alpha chain (Rippkaea orientalis (strain PCC 8801 / RF-1) (Cyanothece sp. (strain PCC 8801))).